The sequence spans 306 residues: Ribosomal protein L11 methyltransferase (306 aa).

Residues Thr-154, Gly-179, Asp-201, and Asn-242 each coordinate S-adenosyl-L-methionine.

This sequence belongs to the methyltransferase superfamily. PrmA family.

It localises to the cytoplasm. The enzyme catalyses L-lysyl-[protein] + 3 S-adenosyl-L-methionine = N(6),N(6),N(6)-trimethyl-L-lysyl-[protein] + 3 S-adenosyl-L-homocysteine + 3 H(+). Its function is as follows. Methylates ribosomal protein L11. This chain is Ribosomal protein L11 methyltransferase, found in Stenotrophomonas maltophilia (strain K279a).